Consider the following 305-residue polypeptide: Coiled-coil domain-containing protein 50 (305 aa).

Residue A2 is modified to N-acetylalanine. At S5 the chain carries Phosphoserine. Positions 86–130 (EIAQEIQEKLTIEAERRRIQEKKDEDIARLLQEKELQEEKRRKKH) form a coiled coil. 2 disordered regions span residues 122–142 (QEEK…VFGD) and 218–305 (KKAK…HNKQ). Composition is skewed to basic and acidic residues over residues 218–239 (KKAK…ECKL) and 247–263 (KSKE…DRPS). Positions 279–305 (THFTNQHSTTWHLPKSESSQKGFHNKQ) are enriched in polar residues.

In terms of assembly, interacts with RNF126. Phosphorylated on tyrosine residues. As to expression, widely expressed.

It localises to the cytoplasm. In terms of biological role, involved in EGFR signaling. The chain is Coiled-coil domain-containing protein 50 (Ccdc50) from Mus musculus (Mouse).